The chain runs to 603 residues: Extracellular basic protease (603 aa).

Positions 1–21 (MNLSNISAVKVLTLVVSAAIA) are cleaved as a signal peptide. Positions 22–132 (GQVCAAESIV…VEVDRLAYPK (111 aa)) are excised as a propeptide. The Peptidase S8 domain occupies 143 to 468 (QWHYFGNYGV…SGIVDANAAV (326 aa)). Asp-173 acts as the Charge relay system in catalysis. Residues 197–221 (PNARDGDQRDNNPADEGDWFDNWDC) are disordered. Cystine bridges form between Cys-221/Cys-273 and Cys-315/Cys-352. His-237 serves as the catalytic Charge relay system. Ser-409 serves as the catalytic Charge relay system. Residues 477-603 (RAQPRPPVNQ…GSIDSWSLTF (127 aa)) constitute a propeptide that is removed on maturation. Residues 478-603 (AQPRPPVNQP…GSIDSWSLTF (126 aa)) enclose the P/Homo B domain.

Belongs to the peptidase S8 family.

The protein localises to the secreted. The protein is Extracellular basic protease (bprV) of Dichelobacter nodosus (Bacteroides nodosus).